The sequence spans 99 residues: Plastocyanin B'/B'' (99 aa).

One can recognise a Plastocyanin-like domain in the interval 1-99 (IEVLLGSDDG…AGMVGKVTVN (99 aa)). Residues histidine 37, cysteine 84, histidine 87, and methionine 92 each contribute to the Cu cation site.

The protein belongs to the plastocyanin family. The cofactor is Cu(2+).

It localises to the plastid. Its subcellular location is the chloroplast thylakoid membrane. Participates in electron transfer between P700 and the cytochrome b6-f complex in photosystem I. In Nicotiana tabacum (Common tobacco), this protein is Plastocyanin B'/B''.